Reading from the N-terminus, the 488-residue chain is Dipeptidase 3 (488 aa).

The signal sequence occupies residues 1 to 35 (MQPTGPEGPRALSLRPLGHRLSLLGVLLIIPSLWV). Over residues 41-60 (TPSLSSAPTSPGASSAMTTP) the composition is skewed to low complexity. The interval 41 to 74 (TPSLSSAPTSPGASSAMTTPGIPNDTTTSGVTSD) is disordered. Disulfide bonds link Cys143/Cys222 and Cys294/Cys326. N-linked (GlcNAc...) asparagine glycosylation occurs at Asn331. A lipid anchor (GPI-anchor amidated serine) is attached at Ser459. Positions 460-487 (KAPPCPLLGLVAAVTSPAFTLWLCCSGH) are cleaved as a propeptide — removed in mature form.

It belongs to the metallo-dependent hydrolases superfamily. Peptidase M19 family. As to quaternary structure, homodimer; disulfide-linked. Interacts with TEX101; co-localized on the cell surface of spermatocytes, spermatids, and testicular spermatozoa, co-localized only in cytoplasmic droplets of caput and corpus epididymal sperm.

It is found in the membrane. Lacks dipeptidase activity and is unable to hydrolyze cystinyl-bis-glycine, leukotriene D4 and the beta-lactam antibiotic imipenem. The absence of activity may be due to the inability of serine (instead of aspartate found in DPEP1/2) at position 356 to function as the acid/base catalyst and activate the nucleophilic water/hydroxide. This Rattus norvegicus (Rat) protein is Dipeptidase 3 (Dpep3).